Here is a 398-residue protein sequence, read N- to C-terminus: Acetate kinase (398 aa).

Residue Asn-9 participates in Mg(2+) binding. Lys-16 lines the ATP pocket. Residue Arg-89 coordinates substrate. Asp-146 serves as the catalytic Proton donor/acceptor. ATP is bound by residues 206-210 (HLGNG), 281-283 (DCR), and 329-333 (GIGEN). Mg(2+) is bound at residue Glu-384.

It belongs to the acetokinase family. In terms of assembly, homodimer. It depends on Mg(2+) as a cofactor. Requires Mn(2+) as cofactor.

Its subcellular location is the cytoplasm. The enzyme catalyses acetate + ATP = acetyl phosphate + ADP. It participates in metabolic intermediate biosynthesis; acetyl-CoA biosynthesis; acetyl-CoA from acetate: step 1/2. In terms of biological role, catalyzes the formation of acetyl phosphate from acetate and ATP. Can also catalyze the reverse reaction. The chain is Acetate kinase from Vibrio campbellii (strain ATCC BAA-1116).